Consider the following 67-residue polypeptide: uncharacterized protein (67 aa).

A run of 2 helical transmembrane segments spans residues E10–W30 and L40–F60.

The protein belongs to the plectrovirus ORF10 family.

Its subcellular location is the host membrane. This is an uncharacterized protein from Spiroplasma melliferum (SpV1).